A 474-amino-acid chain; its full sequence is Light-independent protochlorophyllide reductase subunit N (474 aa).

[4Fe-4S] cluster is bound by residues Cys22, Cys47, and Cys107.

Belongs to the BchN/ChlN family. In terms of assembly, protochlorophyllide reductase is composed of three subunits; ChlL, ChlN and ChlB. Forms a heterotetramer of two ChlB and two ChlN subunits. [4Fe-4S] cluster is required as a cofactor.

Its subcellular location is the plastid. The protein resides in the chloroplast. It catalyses the reaction chlorophyllide a + oxidized 2[4Fe-4S]-[ferredoxin] + 2 ADP + 2 phosphate = protochlorophyllide a + reduced 2[4Fe-4S]-[ferredoxin] + 2 ATP + 2 H2O. The protein operates within porphyrin-containing compound metabolism; chlorophyll biosynthesis (light-independent). Component of the dark-operative protochlorophyllide reductase (DPOR) that uses Mg-ATP and reduced ferredoxin to reduce ring D of protochlorophyllide (Pchlide) to form chlorophyllide a (Chlide). This reaction is light-independent. The NB-protein (ChlN-ChlB) is the catalytic component of the complex. The chain is Light-independent protochlorophyllide reductase subunit N from Physcomitrium patens (Spreading-leaved earth moss).